A 328-amino-acid chain; its full sequence is Carbonic anhydrase-related protein 11 (328 aa).

The N-terminal stretch at 1 to 22 is a signal peptide; that stretch reads MGAAARLSAPRALVLWAALGAA. Positions 33–303 constitute an Alpha-carbonic anhydrase domain; sequence DWWSYKDNLQ…LAHRALRGNR (271 aa). 3 N-linked (GlcNAc...) asparagine glycosylation sites follow: asparagine 118, asparagine 170, and asparagine 260. Residues 300 to 328 form a disordered region; it reads RGNRDPRHPERRCRGPNYRLHVDGAPHGR. Residues 319–328 show a composition bias toward basic and acidic residues; it reads LHVDGAPHGR.

The protein belongs to the alpha-carbonic anhydrase family.

It is found in the secreted. Does not have a catalytic activity. This chain is Carbonic anhydrase-related protein 11 (CA11), found in Bos taurus (Bovine).